A 252-amino-acid polypeptide reads, in one-letter code: tRNA (guanine-N(1)-)-methyltransferase (252 aa).

S-adenosyl-L-methionine-binding positions include glycine 118 and 138–143; that span reads IGDYVL.

The protein belongs to the RNA methyltransferase TrmD family. Homodimer.

It localises to the cytoplasm. It carries out the reaction guanosine(37) in tRNA + S-adenosyl-L-methionine = N(1)-methylguanosine(37) in tRNA + S-adenosyl-L-homocysteine + H(+). In terms of biological role, specifically methylates guanosine-37 in various tRNAs. This Pseudomonas aeruginosa (strain UCBPP-PA14) protein is tRNA (guanine-N(1)-)-methyltransferase.